Here is a 350-residue protein sequence, read N- to C-terminus: Adenine deaminase (350 aa).

H24, H26, and H207 together coordinate Zn(2+). E210 functions as the Proton donor in the catalytic mechanism. D288 is a Zn(2+) binding site. Residue D289 coordinates substrate.

The protein belongs to the metallo-dependent hydrolases superfamily. Adenosine and AMP deaminases family. Adenine deaminase type 2 subfamily. Requires Zn(2+) as cofactor.

The catalysed reaction is adenine + H2O + H(+) = hypoxanthine + NH4(+). Its function is as follows. Catalyzes the hydrolytic deamination of adenine to hypoxanthine. Plays an important role in the purine salvage pathway and in nitrogen catabolism. This chain is Adenine deaminase, found in Paraburkholderia xenovorans (strain LB400).